Reading from the N-terminus, the 299-residue chain is Homoserine kinase (299 aa).

85–95 (PMSRGLGSSAT) serves as a coordination point for ATP.

Belongs to the GHMP kinase family. Homoserine kinase subfamily.

It is found in the cytoplasm. It catalyses the reaction L-homoserine + ATP = O-phospho-L-homoserine + ADP + H(+). The protein operates within amino-acid biosynthesis; L-threonine biosynthesis; L-threonine from L-aspartate: step 4/5. Its function is as follows. Catalyzes the ATP-dependent phosphorylation of L-homoserine to L-homoserine phosphate. The chain is Homoserine kinase from Clostridium novyi (strain NT).